We begin with the raw amino-acid sequence, 395 residues long: Abhydrolase domain-containing protein (395 aa).

In terms of domain architecture, AB hydrolase-1 spans 117–331 (PTIVINHGLT…INAIDDPIAP (215 aa)). Catalysis depends on charge relay system residues Ser-200, Asp-327, and His-356.

This sequence belongs to the AB hydrolase superfamily. AB hydrolase 4 family.

This Dictyostelium discoideum (Social amoeba) protein is Abhydrolase domain-containing protein (abhd).